The sequence spans 157 residues: SsrA-binding protein (157 aa).

Belongs to the SmpB family.

The protein resides in the cytoplasm. Required for rescue of stalled ribosomes mediated by trans-translation. Binds to transfer-messenger RNA (tmRNA), required for stable association of tmRNA with ribosomes. tmRNA and SmpB together mimic tRNA shape, replacing the anticodon stem-loop with SmpB. tmRNA is encoded by the ssrA gene; the 2 termini fold to resemble tRNA(Ala) and it encodes a 'tag peptide', a short internal open reading frame. During trans-translation Ala-aminoacylated tmRNA acts like a tRNA, entering the A-site of stalled ribosomes, displacing the stalled mRNA. The ribosome then switches to translate the ORF on the tmRNA; the nascent peptide is terminated with the 'tag peptide' encoded by the tmRNA and targeted for degradation. The ribosome is freed to recommence translation, which seems to be the essential function of trans-translation. This chain is SsrA-binding protein, found in Levilactobacillus brevis (strain ATCC 367 / BCRC 12310 / CIP 105137 / JCM 1170 / LMG 11437 / NCIMB 947 / NCTC 947) (Lactobacillus brevis).